We begin with the raw amino-acid sequence, 997 residues long: Translation initiation factor IF-2 (997 aa).

Residues 101-406 (ELAAEQAAAR…SRNQHQDRRH (306 aa)) form a disordered region. 2 stretches are compositionally biased toward low complexity: residues 116-185 (AEAV…QAEP) and 195-209 (AAPA…EPAK). Over residues 231–242 (TELTSQTPTPVA) the composition is skewed to polar residues. The span at 256 to 280 (AEPAAAPKTTAKPGEIRRAAAPAAP) shows a compositional bias: low complexity. Residues 281–292 (DRAREEARRAAE) show a composition bias toward basic and acidic residues. The segment covering 385 to 394 (RAGGKGGRGG) has biased composition (gly residues). The 168-residue stretch at 498–665 (PRAPVVTVMG…NVLLQAEILE (168 aa)) folds into the tr-type G domain. The interval 507–514 (GHVDHGKT) is G1. 507 to 514 (GHVDHGKT) contacts GTP. Residues 532 to 536 (GITQH) form a G2 region. Positions 553 to 556 (DTPG) are G3. Residues 553–557 (DTPGH) and 607–610 (NKID) each bind GTP. Residues 607 to 610 (NKID) form a G4 region. The segment at 643–645 (SAK) is G5.

The protein belongs to the TRAFAC class translation factor GTPase superfamily. Classic translation factor GTPase family. IF-2 subfamily.

It localises to the cytoplasm. In terms of biological role, one of the essential components for the initiation of protein synthesis. Protects formylmethionyl-tRNA from spontaneous hydrolysis and promotes its binding to the 30S ribosomal subunits. Also involved in the hydrolysis of GTP during the formation of the 70S ribosomal complex. In Bordetella pertussis (strain Tohama I / ATCC BAA-589 / NCTC 13251), this protein is Translation initiation factor IF-2.